The following is a 103-amino-acid chain: Urease subunit beta (103 aa).

The protein belongs to the urease beta subunit family. Heterotrimer of UreA (gamma), UreB (beta) and UreC (alpha) subunits. Three heterotrimers associate to form the active enzyme.

It is found in the cytoplasm. It carries out the reaction urea + 2 H2O + H(+) = hydrogencarbonate + 2 NH4(+). Its pathway is nitrogen metabolism; urea degradation; CO(2) and NH(3) from urea (urease route): step 1/1. In terms of biological role, ureolysis may allow urea to be employed as a nitrogen source for growth and produces ammonia which may protect from killing at low pH. The sequence is that of Urease subunit beta from Streptococcus salivarius (strain 57.I).